The sequence spans 302 residues: Oxygen-dependent coproporphyrinogen-III oxidase (302 aa).

Residue Ser-94 participates in substrate binding. The a divalent metal cation site is built by His-98 and His-108. His-108 acts as the Proton donor in catalysis. 110–112 (NVR) is a substrate binding site. Residues His-147 and His-177 each coordinate a divalent metal cation. Residues 242-277 (YVEFNLVYDRGTLFGLQTGGRTESILMSMPPLARWE) are important for dimerization. Substrate is bound at residue 260–262 (GGR).

The protein belongs to the aerobic coproporphyrinogen-III oxidase family. In terms of assembly, homodimer. A divalent metal cation serves as cofactor.

The protein localises to the cytoplasm. It carries out the reaction coproporphyrinogen III + O2 + 2 H(+) = protoporphyrinogen IX + 2 CO2 + 2 H2O. It participates in porphyrin-containing compound metabolism; protoporphyrin-IX biosynthesis; protoporphyrinogen-IX from coproporphyrinogen-III (O2 route): step 1/1. Its function is as follows. Involved in the heme biosynthesis. Catalyzes the aerobic oxidative decarboxylation of propionate groups of rings A and B of coproporphyrinogen-III to yield the vinyl groups in protoporphyrinogen-IX. The sequence is that of Oxygen-dependent coproporphyrinogen-III oxidase from Aeromonas salmonicida (strain A449).